The primary structure comprises 325 residues: E3 ubiquitin-protein ligase SIAH2 (325 aa).

The segment covering 1–15 (MSRPSSTGPSANKPC) has biased composition (polar residues). Residues 1 to 43 (MSRPSSTGPSANKPCSKQPPPPQTPHAPSPAAPPAAATISAAG) are disordered. At serine 6 the chain carries Phosphoserine. Phosphoserine; by DYRK2 is present on serine 16. The span at 17–33 (KQPPPPQTPHAPSPAAP) shows a compositional bias: pro residues. Threonine 24 carries the post-translational modification Phosphothreonine; by MAPK14. Serine 29 carries the post-translational modification Phosphoserine; by DYRK2 and MAPK14. The span at 34 to 43 (PAAATISAAG) shows a compositional bias: low complexity. At serine 69 the chain carries Phosphoserine; by DYRK2. The RING-type zinc finger occupies 81-116 (CPVCFDYVLPPILQCQAGHLVCNQCRQKLSCCPTCR). Threonine 120 carries the phosphothreonine; by DYRK2 modification. Positions 131-323 (VASAVLFPCK…LGINVTISTC (193 aa)) are SBD. Residues 134–194 (AVLFPCKYAT…VMSHLMHAHK (61 aa)) form an SIAH-type zinc finger. Zn(2+)-binding residues include cysteine 139, cysteine 146, histidine 158, cysteine 162, cysteine 169, cysteine 176, histidine 188, and histidine 193.

Belongs to the SINA (Seven in absentia) family. Homodimer. Interacts with VAV1, without mediating its ubiquitin-mediated degradation. Probable component of some large E3 complex possibly composed of UBE2D1, SIAH2, CACYBP/SIP, SKP1, APC and TBL1X. Interacts with UBE2I. Interacts with UBE2E2. Interacts with PEG10, which may inhibit its activity. Interacts with PEG3 and EGLN2. Interacts with DYRK2. Interacts with SNCAIP. Interacts with NR1D1 and NR1D2. Interacts with DCC. Interacts with AXIN1. Phosphorylated at Thr-24 and Ser-29 by MAPK14, which mediates the degradation by the proteasome of EGLN3. Phosphorylated at Ser-29 by DYRK2; this increases the ubiquitin ligase activity and promotes degradation of EGLN3. As to expression, detected in brain (at protein level).

The protein resides in the cytoplasm. The protein localises to the nucleus. It carries out the reaction S-ubiquitinyl-[E2 ubiquitin-conjugating enzyme]-L-cysteine + [acceptor protein]-L-lysine = [E2 ubiquitin-conjugating enzyme]-L-cysteine + N(6)-ubiquitinyl-[acceptor protein]-L-lysine.. The protein operates within protein modification; protein ubiquitination. Its function is as follows. E3 ubiquitin-protein ligase that mediates ubiquitination and subsequent proteasomal degradation of target proteins. E3 ubiquitin ligases accept ubiquitin from an E2 ubiquitin-conjugating enzyme in the form of a thioester and then directly transfers the ubiquitin to targeted substrates. Mediates E3 ubiquitin ligase activity either through direct binding to substrates or by functioning as the essential RING domain subunit of larger E3 complexes. Mediates ubiquitination and proteasomal degradation of DYRK2 in response to hypoxia. Promotes monoubiquitination of SNCA. Triggers the ubiquitin-mediated degradation of many substrates, including proteins involved in transcription regulation (GPS2, POU2AF1, PML, NCOR1), a cell surface receptor (DCC), an antiapoptotic protein (BAG1), and a protein involved in synaptic vesicle function in neurons (SYP). It is thereby involved in apoptosis, tumor suppression, cell cycle, transcription and signaling processes. Has some overlapping function with SIAH1. Triggers the ubiquitin-mediated degradation of TRAF2, whereas SIAH1 does not. Regulates cellular clock function via ubiquitination of circadian transcriptional repressors NR1D1 and NR1D2 leading to their proteasomal degradation. Plays an important role in mediating the rhythmic degradation/clearance of NR1D1 and NR1D2 contributing to their circadian profile of protein abundance. Mediates ubiquitination and degradation of EGLN2 and EGLN3 in response to the unfolded protein response (UPR), leading to their degradation and subsequent stabilization of ATF4. Also part of the Wnt signaling pathway in which it mediates the Wnt-induced ubiquitin-mediated proteasomal degradation of AXIN1. The protein is E3 ubiquitin-protein ligase SIAH2 (Siah2) of Rattus norvegicus (Rat).